A 335-amino-acid polypeptide reads, in one-letter code: Large ribosomal subunit protein uL3 (335 aa).

The segment at 1-20 (MATIHRPRRGSLAFSPRKRA) is disordered.

It belongs to the universal ribosomal protein uL3 family. Part of the 50S ribosomal subunit. Forms a cluster with proteins L14 and L24e.

Its function is as follows. One of the primary rRNA binding proteins, it binds directly near the 3'-end of the 23S rRNA, where it nucleates assembly of the 50S subunit. The sequence is that of Large ribosomal subunit protein uL3 (rpl3) from Methanothrix harundinacea (strain 6Ac) (Methanosaeta harundinacea).